A 169-amino-acid chain; its full sequence is Peptide methionine sulfoxide reductase MsrA (169 aa).

The active site involves cysteine 10.

Belongs to the MsrA Met sulfoxide reductase family.

It catalyses the reaction L-methionyl-[protein] + [thioredoxin]-disulfide + H2O = L-methionyl-(S)-S-oxide-[protein] + [thioredoxin]-dithiol. The catalysed reaction is [thioredoxin]-disulfide + L-methionine + H2O = L-methionine (S)-S-oxide + [thioredoxin]-dithiol. Its function is as follows. Has an important function as a repair enzyme for proteins that have been inactivated by oxidation. Catalyzes the reversible oxidation-reduction of methionine sulfoxide in proteins to methionine. In Streptococcus pyogenes serotype M1, this protein is Peptide methionine sulfoxide reductase MsrA.